Reading from the N-terminus, the 253-residue chain is Imidazole glycerol phosphate synthase subunit HisF (253 aa).

Residues aspartate 11 and aspartate 130 contribute to the active site.

It belongs to the HisA/HisF family. As to quaternary structure, heterodimer of HisH and HisF.

It localises to the cytoplasm. It catalyses the reaction 5-[(5-phospho-1-deoxy-D-ribulos-1-ylimino)methylamino]-1-(5-phospho-beta-D-ribosyl)imidazole-4-carboxamide + L-glutamine = D-erythro-1-(imidazol-4-yl)glycerol 3-phosphate + 5-amino-1-(5-phospho-beta-D-ribosyl)imidazole-4-carboxamide + L-glutamate + H(+). It functions in the pathway amino-acid biosynthesis; L-histidine biosynthesis; L-histidine from 5-phospho-alpha-D-ribose 1-diphosphate: step 5/9. Its function is as follows. IGPS catalyzes the conversion of PRFAR and glutamine to IGP, AICAR and glutamate. The HisF subunit catalyzes the cyclization activity that produces IGP and AICAR from PRFAR using the ammonia provided by the HisH subunit. This Clostridium botulinum (strain 657 / Type Ba4) protein is Imidazole glycerol phosphate synthase subunit HisF.